We begin with the raw amino-acid sequence, 77 residues long: DNA-directed RNA polymerase subunit Rpo5 (77 aa).

The protein belongs to the archaeal Rpo5/eukaryotic RPB5 RNA polymerase subunit family. Part of the RNA polymerase complex.

The protein resides in the cytoplasm. It carries out the reaction RNA(n) + a ribonucleoside 5'-triphosphate = RNA(n+1) + diphosphate. Functionally, DNA-dependent RNA polymerase (RNAP) catalyzes the transcription of DNA into RNA using the four ribonucleoside triphosphates as substrates. The protein is DNA-directed RNA polymerase subunit Rpo5 of Methanosphaera stadtmanae (strain ATCC 43021 / DSM 3091 / JCM 11832 / MCB-3).